The chain runs to 408 residues: DNA polymerase processivity factor (408 aa).

The Nuclear localization signal motif lies at 344-353 (KKRRNLLTKR).

Belongs to the herpesviridae DNA polymerase processivity factor family. As to quaternary structure, interacts with the DNA polymerase catalytic subunit. Interacts with the origin-binding protein.

It is found in the host nucleus. Its function is as follows. Plays an essential role in viral DNA replication by acting as the polymerase accessory subunit. Associates with the viral polymerase to increase its processivity and forms high-affinity direct interactions with DNA. Facilitates the origin-binding protein loading onto DNA thus increasing its ability to assemble into a functional complex capable of unwinding duplex DNA. This Varicella-zoster virus (strain Dumas) (HHV-3) protein is DNA polymerase processivity factor.